Here is a 184-residue protein sequence, read N- to C-terminus: Large ribosomal subunit protein uL5 (184 aa).

It belongs to the universal ribosomal protein uL5 family. Part of the 50S ribosomal subunit; part of the 5S rRNA/L5/L18/L25 subcomplex. Contacts the 5S rRNA and the P site tRNA. Forms a bridge to the 30S subunit in the 70S ribosome.

Functionally, this is one of the proteins that bind and probably mediate the attachment of the 5S RNA into the large ribosomal subunit, where it forms part of the central protuberance. In the 70S ribosome it contacts protein S13 of the 30S subunit (bridge B1b), connecting the 2 subunits; this bridge is implicated in subunit movement. Contacts the P site tRNA; the 5S rRNA and some of its associated proteins might help stabilize positioning of ribosome-bound tRNAs. The chain is Large ribosomal subunit protein uL5 from Agrobacterium fabrum (strain C58 / ATCC 33970) (Agrobacterium tumefaciens (strain C58)).